We begin with the raw amino-acid sequence, 331 residues long: Ribose-phosphate pyrophosphokinase (331 aa).

Aspartate 55–glutamate 57 contacts ATP. Histidine 148 and aspartate 187 together coordinate Mg(2+). Residue lysine 211 is part of the active site. D-ribose 5-phosphate contacts are provided by residues arginine 213, aspartate 237, and aspartate 241–threonine 245.

This sequence belongs to the ribose-phosphate pyrophosphokinase family. Class I subfamily. Homohexamer. The cofactor is Mg(2+).

The protein resides in the cytoplasm. It catalyses the reaction D-ribose 5-phosphate + ATP = 5-phospho-alpha-D-ribose 1-diphosphate + AMP + H(+). The protein operates within metabolic intermediate biosynthesis; 5-phospho-alpha-D-ribose 1-diphosphate biosynthesis; 5-phospho-alpha-D-ribose 1-diphosphate from D-ribose 5-phosphate (route I): step 1/1. Involved in the biosynthesis of the central metabolite phospho-alpha-D-ribosyl-1-pyrophosphate (PRPP) via the transfer of pyrophosphoryl group from ATP to 1-hydroxyl of ribose-5-phosphate (Rib-5-P). The polypeptide is Ribose-phosphate pyrophosphokinase (Synechococcus elongatus (strain ATCC 33912 / PCC 7942 / FACHB-805) (Anacystis nidulans R2)).